Consider the following 131-residue polypeptide: Protein SOB FIVE-LIKE 4 (131 aa).

2 disordered regions span residues 1–21 and 40–131; these read MDKE…SSPI and IYNY…YRMK. The segment covering 8–18 has biased composition (polar residues); the sequence is SSESGWTTYLS. The SOFL-A motif lies at 11–16; the sequence is SGWTTY. A compositionally biased stretch (basic and acidic residues) spans 46-58; it reads KVEHEEERNKDSD. The SOFL-B signature appears at 60–69; it reads SMASDASSGP. A compositionally biased stretch (basic and acidic residues) spans 79–109; sequence KALDLKNGKNEGNSKSKNDDDHHNHYHDGKK. A Nuclear localization signal motif is present at residues 107 to 114; that stretch reads GKKTSNSY. Basic residues predominate over residues 114–131; it reads YRKKDKKKRENKSTYRMK.

Belongs to the SOFL plant protein family. Expressed, at low levels, in seedlings, roots, flowers and siliques.

Its subcellular location is the cytoplasm. The protein resides in the nucleus. Functionally, involved in cytokinin-mediated development. The chain is Protein SOB FIVE-LIKE 4 from Arabidopsis thaliana (Mouse-ear cress).